A 446-amino-acid polypeptide reads, in one-letter code: WD repeat domain phosphoinositide-interacting protein 1 (446 aa).

WD repeat units lie at residues 3 to 42 (AEAA…LFSL), 47 to 88 (QLDQ…VYHF), 92 to 126 (TEIC…IHNI), 131 to 173 (LLKT…LYDG), 177 to 216 (KTVC…VFSV), 222 to 261 (LYEF…IFKL), and 304 to 343 (FATA…MYNL). The short motif at 131-136 (LLKTLL) is the Nuclear receptor interaction element. The L/FRRG motif motif lies at 225 to 228 (FRRG). The segment at 386-406 (ARPSASSASTVPGYSEDGGAL) is disordered.

Belongs to the WD repeat PROPPIN family. Interacts with androgen receptor (AR) and the estrogen receptors ESR1 and ESR2. Interacts with WIPI2. Interacts with WDR45. Interacts with ATG16L1. May interact with NUDC. Ubiquitously expressed. Highly expressed in skeletal muscle, heart, testis, pancreas and placenta. Highly expressed in G361, Sk-mel-28, Sk-mel-13, WM852 and WM451 cells. Up-regulated in a variety of tumor tissues.

Its subcellular location is the golgi apparatus. It is found in the trans-Golgi network. It localises to the endosome. The protein localises to the cytoplasmic vesicle. The protein resides in the clathrin-coated vesicle. Its subcellular location is the preautophagosomal structure membrane. It is found in the cytoplasm. It localises to the cytoskeleton. Component of the autophagy machinery that controls the major intracellular degradation process by which cytoplasmic materials are packaged into autophagosomes and delivered to lysosomes for degradation. Plays an important role in starvation- and calcium-mediated autophagy, as well as in mitophagy. Functions downstream of the ULK1 and PI3-kinases that produce phosphatidylinositol 3-phosphate (PtdIns3P) on membranes of the endoplasmic reticulum once activated. Binds phosphatidylinositol 3-phosphate (PtdIns3P), and maybe other phosphoinositides including PtdIns3,5P2 and PtdIns5P, and is recruited to phagophore assembly sites at the endoplasmic reticulum membranes. There, it assists WIPI2 in the recruitment of ATG12-ATG5-ATG16L1, a complex that directly controls the elongation of the nascent autophagosomal membrane. Together with WDR45/WIPI4, promotes ATG2 (ATG2A or ATG2B)-mediated lipid transfer by enhancing ATG2-association with phosphatidylinositol 3-monophosphate (PI3P)-containing membranes. Involved in xenophagy of Staphylococcus aureus. Invading S.aureus cells become entrapped in autophagosome-like WIPI1 positive vesicles targeted for lysosomal degradation. Also plays a distinct role in controlling the transcription of melanogenic enzymes and melanosome maturation, a process that is distinct from starvation-induced autophagy. May also regulate the trafficking of proteins involved in the mannose-6-phosphate receptor (MPR) recycling pathway. This chain is WD repeat domain phosphoinositide-interacting protein 1 (WIPI1), found in Homo sapiens (Human).